A 429-amino-acid polypeptide reads, in one-letter code: Glutamyl-tRNA reductase (429 aa).

Substrate-binding positions include 50 to 53 (TCNR), Ser116, 121 to 123 (EPQ), and Gln127. Cys51 acts as the Nucleophile in catalysis. 196-201 (GAGEMA) lines the NADP(+) pocket.

It belongs to the glutamyl-tRNA reductase family. Homodimer.

It carries out the reaction (S)-4-amino-5-oxopentanoate + tRNA(Glu) + NADP(+) = L-glutamyl-tRNA(Glu) + NADPH + H(+). The protein operates within porphyrin-containing compound metabolism; protoporphyrin-IX biosynthesis; 5-aminolevulinate from L-glutamyl-tRNA(Glu): step 1/2. Catalyzes the NADPH-dependent reduction of glutamyl-tRNA(Glu) to glutamate 1-semialdehyde (GSA). The sequence is that of Glutamyl-tRNA reductase from Thermodesulfovibrio yellowstonii (strain ATCC 51303 / DSM 11347 / YP87).